The primary structure comprises 267 residues: Indole-3-glycerol phosphate synthase (267 aa).

The protein belongs to the TrpC family.

The enzyme catalyses 1-(2-carboxyphenylamino)-1-deoxy-D-ribulose 5-phosphate + H(+) = (1S,2R)-1-C-(indol-3-yl)glycerol 3-phosphate + CO2 + H2O. The protein operates within amino-acid biosynthesis; L-tryptophan biosynthesis; L-tryptophan from chorismate: step 4/5. In Verminephrobacter eiseniae (strain EF01-2), this protein is Indole-3-glycerol phosphate synthase.